The sequence spans 663 residues: Polyunsaturated fatty acid lipoxygenase ALOX12 (663 aa).

The PLAT domain maps to 2-114 (GRYRIRVATG…ILSLPEGTAR (113 aa)). Residues 115–663 (LPGDNALDMF…PSCIENSVTI (549 aa)) form the Lipoxygenase domain. Ser246 carries the phosphoserine modification. Residues His360, His365, His540, Asn544, and Ile663 each coordinate Fe cation.

It belongs to the lipoxygenase family. Requires Fe cation as cofactor. In terms of tissue distribution, expressed in vascular smooth muscle cells.

The protein localises to the cytoplasm. The protein resides in the cytosol. It is found in the membrane. The catalysed reaction is (5Z,8Z,11Z,14Z)-eicosatetraenoate + O2 = (12S)-hydroperoxy-(5Z,8Z,10E,14Z)-eicosatetraenoate. It carries out the reaction (5Z,8Z,11Z,14Z)-eicosatetraenoate + O2 = (15S)-hydroperoxy-(5Z,8Z,11Z,13E)-eicosatetraenoate. The enzyme catalyses 2 leukotriene A4 + O2 + 2 H2O = 2 lipoxin A4. It catalyses the reaction 2 leukotriene A4 + O2 + 2 H2O = 2 lipoxin B4. The catalysed reaction is (14S)-hydroperoxy-(4Z,7Z,10Z,12E,16Z,19Z)-docosahexaenoate = (13S,14S)-epoxy-(4Z,7Z,9E,11E,16Z,19Z)-docosahexaenoate + H2O. It carries out the reaction N-(5Z,8Z,11Z,14Z)-eicosatetraenoyl-L-alanine + O2 = N-(15S)-hydroperoxy-(5Z,8Z,11Z,13E)-eicosatetraenoyl-alanine. The enzyme catalyses N-(5Z,8Z,11Z,14Z)-eicosatetraenoyl-L-alanine + O2 = N-(12S)-hydroperoxy-(5Z,8Z,10E,14Z)-eicosatetraenoyl-alanine. It catalyses the reaction N-(5Z,8Z,11Z,14Z)-eicosatetraenoyl-gamma-aminobutanoate + O2 = N-(15S)-hydroperoxy-(5Z,8Z,11Z,13E)-eicosatetraenoyl-gamma-aminobutanoate. The catalysed reaction is N-(5Z,8Z,11Z,14Z)-eicosatetraenoyl-gamma-aminobutanoate + O2 = N-(12S)-hydroperoxy-(5Z,8Z,10E,14Z)-eicosatetraenoyl-gamma-aminobutanoate. It carries out the reaction N-(5Z,8Z,11Z,14Z)-eicosatetraenoyl-glycine + O2 = N-(15S)-hydroperoxy-(5Z,8Z,11Z,13E)-eicosatetraenoyl-glycine. The enzyme catalyses N-(5Z,8Z,11Z,14Z)-eicosatetraenoyl-glycine + O2 = N-(12S)-hydroperoxy-(5Z,8Z,10E,14Z)-eicosatetraenoyl-glycine. It catalyses the reaction N-(5Z,8Z,11Z,14Z)-eicosatetraenoyl-taurine + O2 = N-(12S)-hydroperoxy-(5Z,8Z,10E,14Z)-eicosatetraenoyl-taurine. The catalysed reaction is N-(5Z,8Z,11Z,14Z)-eicosatetraenoyl-taurine + O2 = N-(15S)-hydroperoxy-(5Z,8Z,11Z,13E)-eicosatetraenoyl-taurine. It carries out the reaction (4Z,7Z,10Z,13Z,16Z,19Z)-docosahexaenoate + O2 = (14S)-hydroperoxy-(4Z,7Z,10Z,12E,16Z,19Z)-docosahexaenoate. The enzyme catalyses (7S)-hydroperoxy-(4Z,8E,10Z,13Z,16Z,19Z)-docosahexaenoate + O2 = (7S,14S)-dihydroperoxy-(4Z,8E,10Z,12E,16Z,19Z)-docosahexaenoate. It catalyses the reaction (7S)-hydroperoxy-(4Z,8E,10Z,13Z,16Z,19Z)-docosahexaenoate + O2 = (7S,17S)-dihydroperoxy-(4Z,8E,10Z,13Z,15E,19Z)-docosahexaenoate. The catalysed reaction is (5Z,8Z,11Z,14Z,17Z)-eicosapentaenoate + O2 = (12S)-hydroperoxy-(5Z,8Z,10E,14Z,17Z)-eicosapentaenoate. It carries out the reaction (8Z,11Z,14Z)-eicosatrienoate + O2 = (12S)-hydroperoxy-(8Z,10E,14Z)-eicosatrienoate. The enzyme catalyses (9Z,12Z)-octadecadienoate + O2 = (13S)-hydroperoxy-(9Z,11E)-octadecadienoate. It catalyses the reaction (5Z,8Z,11Z)-eicosatrienoate + O2 = (12S)-hydroperoxy-(5Z,8Z,10E)-eicosatrienoate. The catalysed reaction is (14R,15S)-epoxy-(5Z,8Z,11Z)-eicosatrienoate + O2 = (12S)-hydroperoxy-(14R,15S)-epoxy-(5Z,8Z,10E)-eicosatrienoate. It carries out the reaction (14S,15R)-epoxy-(5Z,8Z,11Z)-eicosatrienoate + O2 = (12S)-hydroperoxy-(14S,15R)-epoxy-(5Z,8Z,10E)-eicosatrienoate. The protein operates within lipid metabolism; hydroperoxy eicosatetraenoic acid biosynthesis. With respect to regulation, activated by EGF. Arachidonic acid conversion is inhibited by (13S,14S)-epoxy-(4Z,7Z,9E,11E,16Z,19Z)-docosahexaenoate (13S,14S-epoxy-DHA). Arachidonate 12-lipoxygenase activity is decreased when PH decreases from 7.4 to 6. Catalyzes the regio and stereo-specific incorporation of molecular oxygen into free and esterified polyunsaturated fatty acids generating lipid hydroperoxides that can be further reduced to the corresponding hydroxy species. Mainly converts arachidonate ((5Z,8Z,11Z,14Z)-eicosatetraenoate) to the specific bioactive lipid (12S)-hydroperoxyeicosatetraenoate/(12S)-HPETE. Through the production of bioactive lipids like (12S)-HPETE it regulates different biological processes including platelet activation. It can also catalyze the epoxidation of double bonds of polyunsaturated fatty acids such as (14S)-hydroperoxy-docosahexaenoate/(14S)-HPDHA resulting in the formation of (13S,14S)-epoxy-DHA. Furthermore, it may participate in the sequential oxidations of DHA ((4Z,7Z,10Z,13Z,16Z,19Z)-docosahexaenoate) to generate specialized pro-resolving mediators (SPMs) like resolvin D5 ((7S,17S)-diHPDHA) and (7S,14S)-diHPDHA, that actively down-regulate the immune response and have anti-aggregation properties with platelets. An additional function involves a multistep process by which it transforms leukotriene A4/LTA4 into the bioactive lipids lipoxin A4/LXA4 and lipoxin B4/LXB4, both are vasoactive and LXA4 may regulate neutrophil function via occupancy of specific recognition sites. Can also peroxidize linoleate ((9Z,12Z)-octadecadienoate) to (13S)-hydroperoxyoctadecadienoate/ (13S-HPODE). Due to its role in regulating both the expression of the vascular endothelial growth factor (VEGF, an angiogenic factor involved in the survival and metastasis of solid tumors) and the expression of integrin beta-1 (known to affect tumor cell migration and proliferation), it can be regarded as protumorigenic. Important for cell survival, as it may play a role not only in proliferation but also in the prevention of apoptosis in vascular smooth muscle cells. In Homo sapiens (Human), this protein is Polyunsaturated fatty acid lipoxygenase ALOX12.